We begin with the raw amino-acid sequence, 265 residues long: Undecaprenyl-diphosphatase (265 aa).

8 consecutive transmembrane segments (helical) span residues 7–27, 45–65, 86–106, 108–128, 145–165, 186–206, 214–234, and 245–265; these read IIVS…PISS, TKIL…YFFH, LHII…YKKI, LLFN…FLLI, ISLL…YPGF, IEFS…YDFI, ILDL…SILC, and TSLI…YFIN.

Belongs to the UppP family.

Its subcellular location is the cell membrane. The enzyme catalyses di-trans,octa-cis-undecaprenyl diphosphate + H2O = di-trans,octa-cis-undecaprenyl phosphate + phosphate + H(+). Functionally, catalyzes the dephosphorylation of undecaprenyl diphosphate (UPP). Confers resistance to bacitracin. This is Undecaprenyl-diphosphatase from Buchnera aphidicola subsp. Acyrthosiphon pisum (strain Tuc7).